The following is a 428-amino-acid chain: Adenylosuccinate synthetase (428 aa).

GTP is bound by residues 12–18 (GDEGKGK) and 40–42 (GHT). Asp13 serves as the catalytic Proton acceptor. Residues Asp13 and Gly40 each coordinate Mg(2+). IMP-binding positions include 13-16 (DEGK), 38-41 (NAGH), Thr130, Arg144, Gln225, Thr240, and Arg304. His41 serves as the catalytic Proton donor. 300 to 306 (VTTGRAR) contributes to the substrate binding site. GTP contacts are provided by residues Arg306, 332–334 (KID), and 414–416 (SVG).

This sequence belongs to the adenylosuccinate synthetase family. As to quaternary structure, homodimer. Requires Mg(2+) as cofactor.

The protein localises to the cytoplasm. The catalysed reaction is IMP + L-aspartate + GTP = N(6)-(1,2-dicarboxyethyl)-AMP + GDP + phosphate + 2 H(+). It participates in purine metabolism; AMP biosynthesis via de novo pathway; AMP from IMP: step 1/2. Its function is as follows. Plays an important role in the de novo pathway of purine nucleotide biosynthesis. Catalyzes the first committed step in the biosynthesis of AMP from IMP. The protein is Adenylosuccinate synthetase of Clostridium acetobutylicum (strain ATCC 824 / DSM 792 / JCM 1419 / IAM 19013 / LMG 5710 / NBRC 13948 / NRRL B-527 / VKM B-1787 / 2291 / W).